A 1424-amino-acid chain; its full sequence is DNA-directed RNA polymerase subunit beta' (1424 aa).

The Zn(2+) site is built by C60, C62, C75, and C78. Positions 449, 451, and 453 each coordinate Mg(2+). 4 residues coordinate Zn(2+): C783, C857, C864, and C867.

Belongs to the RNA polymerase beta' chain family. In terms of assembly, the RNAP catalytic core consists of 2 alpha, 1 beta, 1 beta' and 1 omega subunit. When a sigma factor is associated with the core the holoenzyme is formed, which can initiate transcription. Mg(2+) serves as cofactor. The cofactor is Zn(2+).

It catalyses the reaction RNA(n) + a ribonucleoside 5'-triphosphate = RNA(n+1) + diphosphate. In terms of biological role, DNA-dependent RNA polymerase catalyzes the transcription of DNA into RNA using the four ribonucleoside triphosphates as substrates. This Treponema denticola (strain ATCC 35405 / DSM 14222 / CIP 103919 / JCM 8153 / KCTC 15104) protein is DNA-directed RNA polymerase subunit beta'.